The chain runs to 96 residues: Myticin-B (96 aa).

The signal sequence occupies residues 1–20 (MKATMLLAVVVAVFVAGTEA). Residues 61–96 (VKFPFGATQDAKSMNELEYTPIMKSMENLDNGMDML) constitute a propeptide, removed in mature form.

In terms of processing, contains four disulfide bonds. In terms of tissue distribution, hemocytes.

It is found in the secreted. Bacteriolytic activity against Gram-positive bacteria M.luteus, B.megaterium and A.viridans and Gram-negative bacteria E.coli D31. Possesses antifungal activity against F.oxysporum. The sequence is that of Myticin-B from Mytilus galloprovincialis (Mediterranean mussel).